Reading from the N-terminus, the 285-residue chain is MAAARLSHRMGRLLEKAPALGPWTRVYSTSPAFAEVLRLPQKQLTKVVYPLRELGQHLAADSGPGLIEQRLFDPSLEDIGRAESIFEATARNRIEYLSSAVRLDHAPSLQQPEVCFIGRSNVGKSSLIKALFSLAPDVEVRISKKPGHTKKMNFFKVGKHFTLVDMPGYGYRAPEDFVDMVETYLKERNNLKRTFLLVDSVVGITKLDNIAIEMCEEFALPYVMILTKIDKSSKGYLLKQVLQIQKFVNTQTQGCFPQLFPISAVTNSGVHLLKCFIADITGSLK.

The EngB-type G domain occupies 110-283 (QQPEVCFIGR…KCFIADITGS (174 aa)). GTP is bound by residues 118 to 125 (GRSNVGKS), 147 to 151 (GHTKK), 165 to 168 (DMPG), 227 to 230 (TKID), and 262 to 264 (ISA). Positions 125 and 149 each coordinate Mg(2+).

It belongs to the TRAFAC class TrmE-Era-EngA-EngB-Septin-like GTPase superfamily. EngB GTPase family. Requires Mg(2+) as cofactor.

The chain is GTP-binding protein 8 (Gtpbp8) from Mus musculus (Mouse).